A 439-amino-acid chain; its full sequence is Xylose isomerase (439 aa).

Active-site residues include H101 and D104. Residues E232, E268, H271, D296, D307, D309, and D339 each coordinate Mg(2+).

This sequence belongs to the xylose isomerase family. In terms of assembly, homotetramer. Mg(2+) serves as cofactor.

It localises to the cytoplasm. It carries out the reaction alpha-D-xylose = alpha-D-xylulofuranose. This is Xylose isomerase from Pseudoalteromonas atlantica (strain T6c / ATCC BAA-1087).